Reading from the N-terminus, the 659-residue chain is Threonine--tRNA ligase (659 aa).

The region spanning 1–60 is the TGS domain; the sequence is MTVYLPDGKPLELPEGATAKDVARALGEGWERRAVGAIVDGELYDLLKPLPQGAKVRLLT. A catalytic region spans residues 252–552; sequence DHRRLGRELE…LIEHFAGDFP (301 aa). Zn(2+) contacts are provided by C349, H400, and H529.

It belongs to the class-II aminoacyl-tRNA synthetase family. In terms of assembly, homodimer. Zn(2+) is required as a cofactor.

The protein resides in the cytoplasm. The enzyme catalyses tRNA(Thr) + L-threonine + ATP = L-threonyl-tRNA(Thr) + AMP + diphosphate + H(+). Functionally, catalyzes the attachment of threonine to tRNA(Thr) in a two-step reaction: L-threonine is first activated by ATP to form Thr-AMP and then transferred to the acceptor end of tRNA(Thr). Also edits incorrectly charged L-seryl-tRNA(Thr). The polypeptide is Threonine--tRNA ligase (Thermus thermophilus (strain ATCC BAA-163 / DSM 7039 / HB27)).